The primary structure comprises 433 residues: Probable D-serine dehydratase (433 aa).

An N6-(pyridoxal phosphate)lysine modification is found at Lys-110.

The protein belongs to the serine/threonine dehydratase family. DsdA subfamily. It depends on pyridoxal 5'-phosphate as a cofactor.

The catalysed reaction is D-serine = pyruvate + NH4(+). The chain is Probable D-serine dehydratase from Oenococcus oeni (strain ATCC BAA-331 / PSU-1).